Here is a 130-residue protein sequence, read N- to C-terminus: Small ribosomal subunit protein uS9 (130 aa).

It belongs to the universal ribosomal protein uS9 family.

The chain is Small ribosomal subunit protein uS9 from Neisseria meningitidis serogroup C (strain 053442).